The following is a 1547-amino-acid chain: Transposon Ty3-G Gag-Pol polyprotein (1547 aa).

Position 2 is an N-acetylserine (S2). A CCHC-type zinc finger spans residues 265–282 (RLCFYCKKEGHRLNECRA). Residue D336 is the For protease activity; shared with dimeric partner of the active site. The Reverse transcriptase domain maps to 620 to 797 (LDNKFIVPSK…EETEFLGYSI (178 aa)). 6 residues coordinate Mg(2+): D686, D748, D749, D893, E936, and D961. The region spanning 893-1011 (DASKDGIGAV…VADAISRAVY (119 aa)) is the RNase H Ty3/gyspy-type domain. Residues 1106–1145 (HTLFGGHFGVTVTLAKISPIYYWPKLQHSIIQYIRTCVQC) form an integrase-type zinc finger-like region. The region spanning 1159 to 1324 (LQPLPIAEGR…SPFEIDLGYL (166 aa)) is the Integrase catalytic domain. Positions 1175 and 1236 each coordinate Mg(2+).

As to quaternary structure, the protease is a homodimer, whose active site consists of two apposed aspartic acid residues. Initially, virus-like particles (VLPs) are composed of the structural unprocessed proteins Gag and Gag-Pol, and also contain the host initiator methionine tRNA (tRNA(i)-Met) which serves as a primer for minus-strand DNA synthesis, and a dimer of genomic Ty RNA. Processing of the polyproteins occurs within the particle and proceeds by an ordered pathway, called maturation. First, the protease (PR) is released by autocatalytic cleavage of the Gag-Pol polyprotein, and this cleavage is a prerequisite for subsequent processing at the remaining sites to release the mature structural and catalytic proteins. Maturation takes place prior to the RT reaction and is required to produce transposition-competent VLPs.

It is found in the cytoplasm. The protein localises to the nucleus. The enzyme catalyses DNA(n) + a 2'-deoxyribonucleoside 5'-triphosphate = DNA(n+1) + diphosphate. It catalyses the reaction Endonucleolytic cleavage to 5'-phosphomonoester.. In terms of biological role, capsid protein (CA) is the structural component of the virus-like particle (VLP), forming the shell that encapsulates the genomic RNA-nucleocapsid complex. Nucleocapsid protein p11 (NC) forms the nucleocore that coats the retro-elements dimeric RNA. Binds these RNAs through its zinc fingers. Promotes primer tRNA(i)-Met annealing to the multipartite primer-binding site (PBS), dimerization of Ty3 RNA and initiation of reverse transcription. Its function is as follows. The aspartyl protease (PR) mediates the proteolytic cleavages of the Gag and Gag-Pol polyproteins after assembly of the VLP. Functionally, reverse transcriptase/ribonuclease H (RT) is a multifunctional enzyme that catalyzes the conversion of the retro-elements RNA genome into dsDNA within the VLP. The enzyme displays a DNA polymerase activity that can copy either DNA or RNA templates, and a ribonuclease H (RNase H) activity that cleaves the RNA strand of RNA-DNA heteroduplexes during plus-strand synthesis and hydrolyzes RNA primers. The conversion leads to a linear dsDNA copy of the retrotransposon that includes long terminal repeats (LTRs) at both ends. In terms of biological role, integrase (IN) targets the VLP to the nucleus, where a subparticle preintegration complex (PIC) containing at least integrase and the newly synthesized dsDNA copy of the retrotransposon must transit the nuclear membrane. Once in the nucleus, integrase performs the integration of the dsDNA into the host genome. The sequence is that of Transposon Ty3-G Gag-Pol polyprotein (TY3B-G) from Saccharomyces cerevisiae (strain ATCC 204508 / S288c) (Baker's yeast).